Here is a 123-residue protein sequence, read N- to C-terminus: MSYINKEGKTTAWRVMTVRQQVSAVLSYGKIQTTLKKAKNTQKRLEKIITIAKVDNFNNRRAVKKWLLNTNSLDVDQLTNHLFKKVAPRFLKRNGGYSRVLKLGVRRGDSTEMAILQLIDATN.

It belongs to the bacterial ribosomal protein bL17 family. In terms of assembly, part of the 50S ribosomal subunit. Contacts protein L32.

This is Large ribosomal subunit protein bL17 from Mycoplasma genitalium (strain ATCC 33530 / DSM 19775 / NCTC 10195 / G37) (Mycoplasmoides genitalium).